Consider the following 149-residue polypeptide: Transcription antitermination protein NusB (149 aa).

Belongs to the NusB family.

Its function is as follows. Involved in transcription antitermination. Required for transcription of ribosomal RNA (rRNA) genes. Binds specifically to the boxA antiterminator sequence of the ribosomal RNA (rrn) operons. This is Transcription antitermination protein NusB from Acinetobacter baylyi (strain ATCC 33305 / BD413 / ADP1).